We begin with the raw amino-acid sequence, 411 residues long: Serine/threonine transporter SstT (411 aa).

8 helical membrane-spanning segments follow: residues 17 to 37, 41 to 61, 79 to 99, 138 to 158, 189 to 209, 214 to 234, 295 to 315, and 327 to 347; these read IMVG…TASA, LGAL…LVLV, ILFL…VVSF, ALIS…GLAL, LGIF…ALWG, LVVL…LIVF, MAGA…TLGI, and VVAA…LLLI.

The protein belongs to the dicarboxylate/amino acid:cation symporter (DAACS) (TC 2.A.23) family.

The protein localises to the cell inner membrane. The enzyme catalyses L-serine(in) + Na(+)(in) = L-serine(out) + Na(+)(out). It carries out the reaction L-threonine(in) + Na(+)(in) = L-threonine(out) + Na(+)(out). Its function is as follows. Involved in the import of serine and threonine into the cell, with the concomitant import of sodium (symport system). The protein is Serine/threonine transporter SstT of Serratia proteamaculans (strain 568).